We begin with the raw amino-acid sequence, 394 residues long: SVGFKAGVKDYRLTYYTPDYETLATDILAAFRVTPQPGVPPEEAGAAVAAESSTGTWTTVWTDGLTSLDRYKGRCYHIEPVAGEENQYIAYVAYPLDLFEEGSVTNMFTSIVGNVFGFKALRALRLEDLRIPPAYSKTFQGPPHGIQVERDKLNKYGRPLLGCTIKPKLGLSAKNYGRAVYECLRGGLDFTKDDENVNSQPFMRWRDRFLFCAEAIYKAQAETGEIKGHYLNATAGTSEEMIKRAVCARELGVPIVMHDYLTGGFTANTSLAHYCRDNGLLLHIHRAMHAVIDRQRNHGIHFRVLAKALRMSGGDHIHSGTVVGKLEGERDVTLGFVDLLRDDFIEKDRSRGIYFTQDWVSMPGVLPVASGGIHVWHMPALTDIFGDDSVLQFG.

N6,N6,N6-trimethyllysine is present on Lys-5. 2 residues coordinate substrate: Asn-114 and Thr-164. Lys-166 functions as the Proton acceptor in the catalytic mechanism. Residue Lys-168 participates in substrate binding. 3 residues coordinate Mg(2+): Lys-192, Asp-194, and Glu-195. An N6-carboxylysine modification is found at Lys-192. His-285 acts as the Proton acceptor in catalysis. Substrate is bound by residues Arg-286, His-318, and Ser-370.

Belongs to the RuBisCO large chain family. Type I subfamily. In terms of assembly, heterohexadecamer of 8 large chains and 8 small chains. It depends on Mg(2+) as a cofactor.

It localises to the plastid. Its subcellular location is the chloroplast. The catalysed reaction is 2 (2R)-3-phosphoglycerate + 2 H(+) = D-ribulose 1,5-bisphosphate + CO2 + H2O. It carries out the reaction D-ribulose 1,5-bisphosphate + O2 = 2-phosphoglycolate + (2R)-3-phosphoglycerate + 2 H(+). Its function is as follows. RuBisCO catalyzes two reactions: the carboxylation of D-ribulose 1,5-bisphosphate, the primary event in carbon dioxide fixation, as well as the oxidative fragmentation of the pentose substrate in the photorespiration process. Both reactions occur simultaneously and in competition at the same active site. The sequence is that of Ribulose bisphosphate carboxylase large chain (rbcL) from Barclaya longifolia (Orchid lily).